A 592-amino-acid chain; its full sequence is MKFCSMNGPSESEVESLLMSPCWGPPQTSAQDQYLLDGHKLLLEHDLDSLPSDADQKNSLDVLDNLLLNGSSLNALSDLKPLPPFTGYTGHLSINGISGHHYHAIAQRLPDESNNNYMQSAYHPQNQSNPTSTTQSNGGSNSNSNNSNEHNIVSSSTCLPESVLSGSGGGGGGNDACLADVKLFADSQLDSKLYSVADSCVMNGSGSGSAANGNGSGPSIATLTPIDQVADSLHNSGVRIYKDLTEYVDMNSIDDIAAIIGSAIADTTVPNQLDKDDNNDTRDSWMDLDAWIDGNCIQQESAKVLVSQQDSLGDFILPHSPLPMHASSSTLQSLLSHGYMPLLQNRLQNGPPNGNSSGGGGGANQGAGIKGDPQAPTSTSYCNELAAATSSSCSPPGSVVSTTDNPNGLMINPRYLSNPTNNQATGNLHQQGGYSMQASGLSLKDNGLCSPDLLGNYPHTTTASTTGSEMRTGAPKAKRSRSQKKSNQQQQQQQQQQQQQGDGGGQPTTPQMSAISPSGFSASDLSGLLGKEKPVHRCSICNRGFLNKSNIKVHLRTHTGEKPFRCDVCAKAFRQKAHLLKHQQIHKRIGRD.

Over residues 114–123 the composition is skewed to polar residues; it reads NNNYMQSAYH. Disordered stretches follow at residues 114 to 156, 343 to 377, 416 to 439, and 459 to 527; these read NNNY…VSSS, LQNR…QAPT, LSNP…MQAS, and HTTT…DLSG. Residues 124–148 are compositionally biased toward low complexity; that stretch reads PQNQSNPTSTTQSNGGSNSNSNNSN. A compositionally biased stretch (gly residues) spans 356 to 369; that stretch reads SSGGGGGANQGAGI. A compositionally biased stretch (polar residues) spans 459–469; the sequence is HTTTASTTGSE. Over residues 488-500 the composition is skewed to low complexity; it reads QQQQQQQQQQQQQ. Residues 507–524 are compositionally biased toward polar residues; it reads PTTPQMSAISPSGFSASD. 2 C2H2-type zinc fingers span residues 536–558 and 564–586; these read HRCS…LRTH and FRCD…QQIH.

Its subcellular location is the nucleus. Its function is as follows. Transcriptional activator. In tracheal terminal cells, regulates the transcription of factors involved in the formation of a mature apical extracellular matrix (aECM) which is essential for the integrity and shape of seamless tubes. This chain is Ichor, found in Drosophila melanogaster (Fruit fly).